The primary structure comprises 598 residues: Elongation factor 4 (598 aa).

The 183-residue stretch at 4–186 folds into the tr-type G domain; sequence INIRNFAIIA…AIVSRLPAPS (183 aa). GTP-binding positions include 16-21 and 133-136; these read DHGKST and NKID.

This sequence belongs to the TRAFAC class translation factor GTPase superfamily. Classic translation factor GTPase family. LepA subfamily.

Its subcellular location is the cell inner membrane. The catalysed reaction is GTP + H2O = GDP + phosphate + H(+). Required for accurate and efficient protein synthesis under certain stress conditions. May act as a fidelity factor of the translation reaction, by catalyzing a one-codon backward translocation of tRNAs on improperly translocated ribosomes. Back-translocation proceeds from a post-translocation (POST) complex to a pre-translocation (PRE) complex, thus giving elongation factor G a second chance to translocate the tRNAs correctly. Binds to ribosomes in a GTP-dependent manner. The protein is Elongation factor 4 of Ehrlichia ruminantium (strain Welgevonden).